The primary structure comprises 129 residues: D-ribose pyranase (129 aa).

His20 (proton donor) is an active-site residue. Residues Asp28, His96, and 118-120 (YAN) contribute to the substrate site.

Belongs to the RbsD / FucU family. RbsD subfamily. As to quaternary structure, homodecamer.

Its subcellular location is the cytoplasm. It catalyses the reaction beta-D-ribopyranose = beta-D-ribofuranose. It participates in carbohydrate metabolism; D-ribose degradation; D-ribose 5-phosphate from beta-D-ribopyranose: step 1/2. In terms of biological role, catalyzes the interconversion of beta-pyran and beta-furan forms of D-ribose. The sequence is that of D-ribose pyranase from Staphylococcus haemolyticus (strain JCSC1435).